Consider the following 328-residue polypeptide: 5,10-methylenetetrahydromethanopterin reductase (328 aa).

The protein belongs to the mer family.

The protein localises to the cytoplasm. It carries out the reaction 5-methyl-5,6,7,8-tetrahydromethanopterin + oxidized coenzyme F420-(gamma-L-Glu)(n) + H(+) = 5,10-methylenetetrahydromethanopterin + reduced coenzyme F420-(gamma-L-Glu)(n). Its pathway is one-carbon metabolism; methanogenesis from CO(2); methyl-coenzyme M from 5,10-methylene-5,6,7,8-tetrahydromethanopterin: step 1/2. Functionally, catalyzes the reversible reduction of methylene-H(4)MPT to methyl-H(4)MPT. The protein is 5,10-methylenetetrahydromethanopterin reductase of Methanosarcina barkeri (strain Fusaro / DSM 804).